A 97-amino-acid polypeptide reads, in one-letter code: Co-chaperonin GroES (97 aa).

The protein belongs to the GroES chaperonin family. In terms of assembly, heptamer of 7 subunits arranged in a ring. Interacts with the chaperonin GroEL.

The protein resides in the cytoplasm. Together with the chaperonin GroEL, plays an essential role in assisting protein folding. The GroEL-GroES system forms a nano-cage that allows encapsulation of the non-native substrate proteins and provides a physical environment optimized to promote and accelerate protein folding. GroES binds to the apical surface of the GroEL ring, thereby capping the opening of the GroEL channel. The protein is Co-chaperonin GroES of Wigglesworthia glossinidia brevipalpis.